The primary structure comprises 349 residues: uncharacterized protein (349 aa).

The chain crosses the membrane as a helical span at residues 16–36; it reads LVITIISTGLIFGMTLVLTGL. Positions 111–139 are disordered; the sequence is FGAPEHGPGMPRVSEGRSPSKPDEVAASS. Residues 124 to 134 are compositionally biased toward basic and acidic residues; the sequence is SEGRSPSKPDE. Helical transmembrane passes span 231 to 251, 284 to 304, and 307 to 327; these read ISIV…SVVY, VIAL…APLF, and IVAV…VIGL.

The protein belongs to the ABC-4 integral membrane protein family. In terms of assembly, the complex is composed of two ATP-binding proteins (MT0079), two transmembrane proteins (MT0078) and a solute-binding protein.

It is found in the cell membrane. Its function is as follows. Probably part of an ABC transporter complex. Probably responsible for the translocation of the substrate across the membrane. This is an uncharacterized protein from Mycobacterium tuberculosis (strain CDC 1551 / Oshkosh).